Consider the following 290-residue polypeptide: MTVLANHSFAKMNGIGNEIVIVDLRNTDSQLSAAEARAIAAPGGVPYDQLMVLQKPRMPGTTAFVRIYNNDGSEAGACGNGMRCVAKRVFGESGAQAATFETRAGLLNCWQGPSPDLYTVDMGTPKFGWQDIPLAEEFRDTRYIELQIGPIDAPVLHSPSVVSMGNPHAIFWVDDIEAYDLERLGPLLENHPIFPERANITLAHVVDRNHIRMRTWERGAGLTLACGSAACATAVAAARLKRTDRTVEMSLPGGDLTIEWRESDDHVLMTGAAVLEYEGLFDPDLFAALA.

Substrate contacts are provided by N17, Q49, and N69. C78 serves as the catalytic Proton donor. Residues 79-80, N166, N199, and 217-218 contribute to the substrate site; these read GN and ER. C226 acts as the Proton acceptor in catalysis. 227 to 228 is a binding site for substrate; that stretch reads GS.

The protein belongs to the diaminopimelate epimerase family. In terms of assembly, homodimer.

It localises to the cytoplasm. It catalyses the reaction (2S,6S)-2,6-diaminopimelate = meso-2,6-diaminopimelate. It participates in amino-acid biosynthesis; L-lysine biosynthesis via DAP pathway; DL-2,6-diaminopimelate from LL-2,6-diaminopimelate: step 1/1. Its function is as follows. Catalyzes the stereoinversion of LL-2,6-diaminopimelate (L,L-DAP) to meso-diaminopimelate (meso-DAP), a precursor of L-lysine and an essential component of the bacterial peptidoglycan. This is Diaminopimelate epimerase from Afipia carboxidovorans (strain ATCC 49405 / DSM 1227 / KCTC 32145 / OM5) (Oligotropha carboxidovorans).